The sequence spans 219 residues: Ribosomal RNA large subunit methyltransferase E (219 aa).

S-adenosyl-L-methionine is bound by residues Gly-60, Trp-62, Asp-80, Asp-96, and Asp-120. Lys-160 acts as the Proton acceptor in catalysis.

The protein belongs to the class I-like SAM-binding methyltransferase superfamily. RNA methyltransferase RlmE family.

It is found in the cytoplasm. It carries out the reaction uridine(2552) in 23S rRNA + S-adenosyl-L-methionine = 2'-O-methyluridine(2552) in 23S rRNA + S-adenosyl-L-homocysteine + H(+). In terms of biological role, specifically methylates the uridine in position 2552 of 23S rRNA at the 2'-O position of the ribose in the fully assembled 50S ribosomal subunit. In Acidithiobacillus ferrooxidans (strain ATCC 23270 / DSM 14882 / CIP 104768 / NCIMB 8455) (Ferrobacillus ferrooxidans (strain ATCC 23270)), this protein is Ribosomal RNA large subunit methyltransferase E.